A 505-amino-acid polypeptide reads, in one-letter code: 2,3-bisphosphoglycerate-independent phosphoglycerate mutase (505 aa).

Mn(2+) is bound by residues Asp13 and Ser63. Catalysis depends on Ser63, which acts as the Phosphoserine intermediate. Substrate is bound by residues His124, 153-154 (RD), Arg183, Arg189, 254-257 (RADR), and Lys330. Asp396, His400, Asp437, His438, and His456 together coordinate Mn(2+).

This sequence belongs to the BPG-independent phosphoglycerate mutase family. As to quaternary structure, monomer. Mn(2+) serves as cofactor.

The enzyme catalyses (2R)-2-phosphoglycerate = (2R)-3-phosphoglycerate. Its pathway is carbohydrate degradation; glycolysis; pyruvate from D-glyceraldehyde 3-phosphate: step 3/5. Catalyzes the interconversion of 2-phosphoglycerate and 3-phosphoglycerate. The protein is 2,3-bisphosphoglycerate-independent phosphoglycerate mutase of Roseobacter denitrificans (strain ATCC 33942 / OCh 114) (Erythrobacter sp. (strain OCh 114)).